Consider the following 469-residue polypeptide: Aryl-phospho-beta-D-glucosidase BglH (469 aa).

Glutamate 175 acts as the Proton donor in catalysis. Glutamate 368 functions as the Nucleophile in the catalytic mechanism.

It belongs to the glycosyl hydrolase 1 family.

The enzyme catalyses 6-phospho-beta-D-glucosyl-(1-&gt;4)-D-glucose + H2O = D-glucose 6-phosphate + D-glucose. Functionally, catalyzes the hydrolysis of aryl-phospho-beta-D-glucosides such as 4-methylumbelliferyl-phospho-beta-D-glucopyranoside (MUG-P), phosphoarbutin and phosphosalicin. Plays a major role in the utilization of arbutin or salicin as the sole carbon source. BglA and BglH are the major proteins contributing to hydrolysis of MUG-P by extracts of late-exponential-phase or stationary-phase B.subtilis cells. The protein is Aryl-phospho-beta-D-glucosidase BglH (bglH) of Bacillus subtilis (strain 168).